A 410-amino-acid polypeptide reads, in one-letter code: LL-diaminopimelate aminotransferase (410 aa).

Residues Tyr-15 and Gly-42 each contribute to the substrate site. Pyridoxal 5'-phosphate-binding positions include Tyr-72, Ser-108 to Lys-109, Tyr-132, Asn-187, Tyr-218, and Ser-246 to Ser-248. The substrate site is built by Lys-109, Tyr-132, and Asn-187. Lys-249 is modified (N6-(pyridoxal phosphate)lysine). 2 residues coordinate pyridoxal 5'-phosphate: Arg-257 and Asn-292. 2 residues coordinate substrate: Asn-292 and Arg-388.

Belongs to the class-I pyridoxal-phosphate-dependent aminotransferase family. LL-diaminopimelate aminotransferase subfamily. In terms of assembly, homodimer. The cofactor is pyridoxal 5'-phosphate.

The enzyme catalyses (2S,6S)-2,6-diaminopimelate + 2-oxoglutarate = (S)-2,3,4,5-tetrahydrodipicolinate + L-glutamate + H2O + H(+). It functions in the pathway amino-acid biosynthesis; L-lysine biosynthesis via DAP pathway; LL-2,6-diaminopimelate from (S)-tetrahydrodipicolinate (aminotransferase route): step 1/1. In terms of biological role, involved in the synthesis of meso-diaminopimelate (m-DAP or DL-DAP), required for both lysine and peptidoglycan biosynthesis. Catalyzes the direct conversion of tetrahydrodipicolinate to LL-diaminopimelate. In Thermosynechococcus vestitus (strain NIES-2133 / IAM M-273 / BP-1), this protein is LL-diaminopimelate aminotransferase.